Consider the following 54-residue polypeptide: Protein PIGBOS1 (54 aa).

Topologically, residues 1 to 4 (MFRR) are mitochondrial intermembrane. The chain crosses the membrane as a helical span at residues 5–25 (LTFAQLLFATVLGIAGGVYIF). The Cytoplasmic portion of the chain corresponds to 26 to 54 (QPVFEQYAKDQKELKEKMQLVQESEEKKS). Positions 30 to 36 (EQYAKDQ) are required for interaction with CLCC1.

Homooligomer. Interacts (via C-terminus) with endoplasmic reticulum (ER) protein CLCC1; the interaction occurs at the mitochondria-associated ER membrane, a zone of contact between the ER and mitochondrial membranes, but does not appear to play a role in ER-mitochondria tethering and is not affected by ER stress.

Its subcellular location is the mitochondrion outer membrane. In terms of biological role, plays a role in regulation of the unfolded protein response triggered by endoplasmic reticulum (ER) stress resulting from the presence of unfolded proteins in the ER lumen. The protein is Protein PIGBOS1 of Homo sapiens (Human).